Here is a 318-residue protein sequence, read N- to C-terminus: Acetyl-coenzyme A carboxylase carboxyl transferase subunit alpha (318 aa).

The CoA carboxyltransferase C-terminal domain maps to 43 to 293 (RSQTALRDLY…GDGIAAALKS (251 aa)).

It belongs to the AccA family. Acetyl-CoA carboxylase is a heterohexamer composed of biotin carboxyl carrier protein (AccB), biotin carboxylase (AccC) and two subunits each of ACCase subunit alpha (AccA) and ACCase subunit beta (AccD).

The protein resides in the cytoplasm. It catalyses the reaction N(6)-carboxybiotinyl-L-lysyl-[protein] + acetyl-CoA = N(6)-biotinyl-L-lysyl-[protein] + malonyl-CoA. The protein operates within lipid metabolism; malonyl-CoA biosynthesis; malonyl-CoA from acetyl-CoA: step 1/1. Functionally, component of the acetyl coenzyme A carboxylase (ACC) complex. First, biotin carboxylase catalyzes the carboxylation of biotin on its carrier protein (BCCP) and then the CO(2) group is transferred by the carboxyltransferase to acetyl-CoA to form malonyl-CoA. The protein is Acetyl-coenzyme A carboxylase carboxyl transferase subunit alpha of Bartonella bacilliformis (strain ATCC 35685 / KC583 / Herrer 020/F12,63).